Consider the following 249-residue polypeptide: Methylthioribulose-1-phosphate dehydratase (249 aa).

Position 102 (C102) interacts with substrate. Zn(2+)-binding residues include H120 and H122. Residue E148 is the Proton donor/acceptor of the active site. Residue H205 participates in Zn(2+) binding.

Belongs to the aldolase class II family. MtnB subfamily. Zn(2+) serves as cofactor.

The protein resides in the cytoplasm. It catalyses the reaction 5-(methylsulfanyl)-D-ribulose 1-phosphate = 5-methylsulfanyl-2,3-dioxopentyl phosphate + H2O. Its pathway is amino-acid biosynthesis; L-methionine biosynthesis via salvage pathway; L-methionine from S-methyl-5-thio-alpha-D-ribose 1-phosphate: step 2/6. In terms of biological role, catalyzes the dehydration of methylthioribulose-1-phosphate (MTRu-1-P) into 2,3-diketo-5-methylthiopentyl-1-phosphate (DK-MTP-1-P). The sequence is that of Methylthioribulose-1-phosphate dehydratase from Botryotinia fuckeliana (strain B05.10) (Noble rot fungus).